Reading from the N-terminus, the 388-residue chain is Alanine racemase (388 aa).

Catalysis depends on Lys-44, which acts as the Proton acceptor; specific for D-alanine. Position 44 is an N6-(pyridoxal phosphate)lysine (Lys-44). Arg-142 provides a ligand contact to substrate. Tyr-273 functions as the Proton acceptor; specific for L-alanine in the catalytic mechanism. Residue Met-321 coordinates substrate.

This sequence belongs to the alanine racemase family. Requires pyridoxal 5'-phosphate as cofactor.

The enzyme catalyses L-alanine = D-alanine. The protein operates within amino-acid biosynthesis; D-alanine biosynthesis; D-alanine from L-alanine: step 1/1. Functionally, catalyzes the interconversion of L-alanine and D-alanine. May also act on other amino acids. The chain is Alanine racemase (alr) from Mycobacterium ulcerans (strain Agy99).